A 308-amino-acid chain; its full sequence is Acetaldehyde dehydrogenase (308 aa).

10–13 provides a ligand contact to NAD(+); that stretch reads SGNI. The Acyl-thioester intermediate role is filled by C128. NAD(+) is bound by residues 159–167 and N285; that span reads SAGPGTRAN.

The protein belongs to the acetaldehyde dehydrogenase family.

It catalyses the reaction acetaldehyde + NAD(+) + CoA = acetyl-CoA + NADH + H(+). The polypeptide is Acetaldehyde dehydrogenase (Salinispora tropica (strain ATCC BAA-916 / DSM 44818 / JCM 13857 / NBRC 105044 / CNB-440)).